The sequence spans 134 residues: ATP synthase epsilon chain (134 aa).

This sequence belongs to the ATPase epsilon chain family. As to quaternary structure, F-type ATPases have 2 components, CF(1) - the catalytic core - and CF(0) - the membrane proton channel. CF(1) has five subunits: alpha(3), beta(3), gamma(1), delta(1), epsilon(1). CF(0) has three main subunits: a, b and c.

The protein localises to the cellular thylakoid membrane. In terms of biological role, produces ATP from ADP in the presence of a proton gradient across the membrane. The protein is ATP synthase epsilon chain of Prochlorococcus marinus (strain MIT 9215).